A 373-amino-acid chain; its full sequence is Alanine dehydrogenase (373 aa).

Substrate contacts are provided by Arg-15 and Lys-75. The Proton donor/acceptor role is filled by His-96. Residues Ser-134, 178-179 (IV), Asp-198, Ser-220, 239-240 (VL), 267-270 (VAID), Arg-280, and 299-302 (VANI) contribute to the NAD(+) site. Asp-270 acts as the Proton donor/acceptor in catalysis.

The protein belongs to the AlaDH/PNT family. Homohexamer. Trimer of dimer.

It localises to the cytoplasm. The enzyme catalyses L-alanine + NAD(+) + H2O = pyruvate + NH4(+) + NADH + H(+). The protein operates within amino-acid degradation; L-alanine degradation via dehydrogenase pathway; NH(3) and pyruvate from L-alanine: step 1/1. In terms of biological role, catalyzes the reversible reductive amination of pyruvate to L-alanine. This enzyme is a key factor in the assimilation of L-alanine as an energy source through the tricarboxylic acid cycle. The protein is Alanine dehydrogenase of Methanococcus maripaludis (strain DSM 14266 / JCM 13030 / NBRC 101832 / S2 / LL).